A 456-amino-acid polypeptide reads, in one-letter code: Gustatory receptor for sugar taste 64a (456 aa).

The segment at 1-30 (MKGPNLNFRKTPSKDNGVKQVESLARPETP) is disordered. Residues 1–91 (MKGPNLNFRK…RESNPRRVRF (91 aa)) lie on the Cytoplasmic side of the membrane. Residues 92–114 (AYKSIPMFVTLIFMIATSILFLS) traverse the membrane as a helical segment. Residues 115–128 (MFTHLLKIGITAKN) are Extracellular-facing. Residues 129–150 (FVGLVFFGCVLSAYVVFIRLAK) traverse the membrane as a helical segment. Gly131 is a binding site for sucrose. The Cytoplasmic segment spans residues 151 to 182 (KWPAVVRIWTRTEIPFTKPPYEIPKRNLSRRV). Residues 183-205 (QLAALAIIGLSLGEHALYQVSAI) form a helical membrane-spanning segment. Sucrose contacts are provided by Glu196, His197, and Tyr234. Positions 196, 197, 234, 253, and 257 each coordinate D-maltose. The Extracellular portion of the chain corresponds to 206–245 (LSYTRRIQMCANITTVPSFNNYMQTNYDYVFQLLPYSPII). The helical transmembrane segment at 246-271 (AVLILLINGACTFVWNYMDLFIMMIS) threads the bilayer. Thr257 provides a ligand contact to sucrose. At 272 to 318 (KGLSYRFEQITTRIRKLEHEEVCESVFIQIREHYVKMCELLEFVDSA) the chain is on the cytoplasmic side. A helical transmembrane segment spans residues 319 to 342 (MSSLILLSCVNNLYFVCYQLLNVF). The Extracellular segment spans residues 343–350 (NKLRWPIN). Residues 351–373 (YIYFWYSLLYLIGRTAFVFLTAA) form a helical membrane-spanning segment. Sucrose is bound at residue Tyr353. Residue Tyr353 participates in D-maltose binding. Residues 374–421 (DINEESKRGLGVLRRVSSRSWCVEVERLIFQMTTQTVALSGKKFYFLT) lie on the Cytoplasmic side of the membrane. A helical membrane pass occupies residues 422–441 (RRLLFGMAGTIVTYELVLLQ). Residues 442-456 (FDEPNRRKGLQPLCA) lie on the Extracellular side of the membrane.

This sequence belongs to the insect chemoreceptor superfamily. Gustatory receptor (GR) family. Gr5a subfamily. As to quaternary structure, homotetramer. Expressed in Gr5a-expressing sugar-sensing cells.

Its subcellular location is the cell membrane. Functionally, one of the few identified sugar gustatory receptors identified so far and which promotes the starvation-induced increase of feeding motivation. Required in combination with Gr64f to detect sucrose, maltose, and glucose. In Drosophila melanogaster (Fruit fly), this protein is Gustatory receptor for sugar taste 64a (Gr64a).